A 186-amino-acid polypeptide reads, in one-letter code: Mating-type-like protein ALPHA2 (186 aa).

The homeobox; TALE-type DNA-binding region spans 112–174 (KKIKSRRLTK…NRRRKEKNTK (63 aa)).

It belongs to the TALE/M-ATYP homeobox family. In terms of assembly, forms a heterodimer with A1.

It is found in the nucleus. Its function is as follows. Mating type proteins are sequence specific DNA-binding proteins that act as master switches in yeast differentiation by controlling gene expression in a cell type-specific fashion. Transcriptional corepressor that acts in conjunction with A1 to repress transcription both of homozygote-specific genes and of genes necessary for the white-opaque switch, a prerequisite for mating. This is Mating-type-like protein ALPHA2 (MTLALPHA2) from Candida albicans (strain SC5314 / ATCC MYA-2876) (Yeast).